The primary structure comprises 271 residues: Tryptophan synthase alpha chain (271 aa).

Residues glutamate 49 and aspartate 60 each act as proton acceptor in the active site.

The protein belongs to the TrpA family. As to quaternary structure, tetramer of two alpha and two beta chains.

The catalysed reaction is (1S,2R)-1-C-(indol-3-yl)glycerol 3-phosphate + L-serine = D-glyceraldehyde 3-phosphate + L-tryptophan + H2O. It participates in amino-acid biosynthesis; L-tryptophan biosynthesis; L-tryptophan from chorismate: step 5/5. The alpha subunit is responsible for the aldol cleavage of indoleglycerol phosphate to indole and glyceraldehyde 3-phosphate. This Burkholderia cenocepacia (strain ATCC BAA-245 / DSM 16553 / LMG 16656 / NCTC 13227 / J2315 / CF5610) (Burkholderia cepacia (strain J2315)) protein is Tryptophan synthase alpha chain.